Here is a 230-residue protein sequence, read N- to C-terminus: Large ribosomal subunit protein uL1 (230 aa).

The protein belongs to the universal ribosomal protein uL1 family. In terms of assembly, part of the 50S ribosomal subunit.

Functionally, binds directly to 23S rRNA. The L1 stalk is quite mobile in the ribosome, and is involved in E site tRNA release. In terms of biological role, protein L1 is also a translational repressor protein, it controls the translation of the L11 operon by binding to its mRNA. This chain is Large ribosomal subunit protein uL1, found in Bradyrhizobium sp. (strain ORS 278).